Here is a 181-residue protein sequence, read N- to C-terminus: Large ribosomal subunit protein uL5 (181 aa).

The protein belongs to the universal ribosomal protein uL5 family. As to quaternary structure, part of the 50S ribosomal subunit; contacts the 5S rRNA and probably tRNA. Forms a bridge to the 30S subunit in the 70S ribosome.

Functionally, this is one of the proteins that bind and probably mediate the attachment of the 5S RNA into the large ribosomal subunit, where it forms part of the central protuberance. In the 70S ribosome it contacts protein S13 of the 30S subunit (bridge B1b), connecting the 2 subunits; this bridge is implicated in subunit movement. May contact the P site tRNA; the 5S rRNA and some of its associated proteins might help stabilize positioning of ribosome-bound tRNAs. The polypeptide is Large ribosomal subunit protein uL5 (Methanococcus maripaludis (strain DSM 14266 / JCM 13030 / NBRC 101832 / S2 / LL)).